The sequence spans 253 residues: MVLIRVIANLLILQLSYAQKSSELVIGGDECNINEHPFLAFLYTGWIFCSGTLINKEWVLTVKQCNNRRPMRIYLGMHTRSVPNDDEEIRYPKEMFICPNKKKNDIMLIRLNRPVNNSEHIAPLSLPSNPPSVGSVCRIMGWGTITPSKATYPDVPHCANINLFNYTVCRGAHAGLPVTSRKLCAGVLEGGIDTCSADSGGPLICNGQLQGIVSWRGGSCAQPHKPGLYTKVFDYLPWIQSIIAGSTTATCPP.

The first 18 residues, 1–18 (MVLIRVIANLLILQLSYA), serve as a signal peptide directing secretion. The propeptide occupies 19–24 (QKSSEL). Positions 25–244 (VIGGDECNIN…YLPWIQSIIA (220 aa)) constitute a Peptidase S1 domain. 6 disulfide bridges follow: cysteine 31–cysteine 158, cysteine 49–cysteine 65, cysteine 98–cysteine 251, cysteine 137–cysteine 205, cysteine 169–cysteine 184, and cysteine 195–cysteine 220. Asparagine 116 and asparagine 165 each carry an N-linked (GlcNAc...) asparagine glycan.

Belongs to the peptidase S1 family. Snake venom subfamily. Expressed by the venom gland.

It localises to the secreted. Its function is as follows. Snake venom serine protease homolog that may act in the hemostasis system of the prey. The protein is Snake venom serine protease homolog HS120 of Bothrops jararaca (Jararaca).